The sequence spans 229 residues: Ras-like protein rasV (229 aa).

Residue 40–47 (GDGGVGKT) participates in GTP binding. Positions 62 to 70 (YDPTIEDSY) match the Effector region motif. Residues 87-91 (DTAGQ) and 146-149 (NKSD) each bind GTP. At C226 the chain carries Cysteine methyl ester. The S-geranylgeranyl cysteine moiety is linked to residue C226. The propeptide at 227–229 (KVM) is removed in mature form.

This sequence belongs to the small GTPase superfamily. Ras family.

Its subcellular location is the cell membrane. It carries out the reaction GTP + H2O = GDP + phosphate + H(+). Its function is as follows. Ras proteins bind GDP/GTP and possess intrinsic GTPase activity. This chain is Ras-like protein rasV (rasV), found in Dictyostelium discoideum (Social amoeba).